The chain runs to 400 residues: Tryptophan synthase beta chain (400 aa).

Lysine 95 carries the N6-(pyridoxal phosphate)lysine modification.

Belongs to the TrpB family. Tetramer of two alpha and two beta chains. Requires pyridoxal 5'-phosphate as cofactor.

It catalyses the reaction (1S,2R)-1-C-(indol-3-yl)glycerol 3-phosphate + L-serine = D-glyceraldehyde 3-phosphate + L-tryptophan + H2O. It participates in amino-acid biosynthesis; L-tryptophan biosynthesis; L-tryptophan from chorismate: step 5/5. Functionally, the beta subunit is responsible for the synthesis of L-tryptophan from indole and L-serine. The chain is Tryptophan synthase beta chain from Chlorobaculum tepidum (strain ATCC 49652 / DSM 12025 / NBRC 103806 / TLS) (Chlorobium tepidum).